Consider the following 150-residue polypeptide: FAD synthase (150 aa).

ATP-binding positions include 11–12, 16–19, Asp96, and Tyr124; these read TF and HPGH.

The protein belongs to the archaeal FAD synthase family. Homodimer. A divalent metal cation serves as cofactor.

It catalyses the reaction FMN + ATP + H(+) = FAD + diphosphate. It participates in cofactor biosynthesis; FAD biosynthesis; FAD from FMN: step 1/1. In terms of biological role, catalyzes the transfer of the AMP portion of ATP to flavin mononucleotide (FMN) to produce flavin adenine dinucleotide (FAD) coenzyme. The polypeptide is FAD synthase (Methanococcus maripaludis (strain DSM 14266 / JCM 13030 / NBRC 101832 / S2 / LL)).